Consider the following 64-residue polypeptide: Alpha-conotoxin CnIL (64 aa).

An N-terminal signal peptide occupies residues 1 to 21 (MGMRMMFTVFLLVVLTTTVVS). Positions 22-49 (FPSDSASDGRDDEAKDERSDIYESKRDG) are excised as a propeptide. 2 disulfide bridges follow: cysteine 51–cysteine 56 and cysteine 52–cysteine 62. Residue cysteine 62 is modified to Cysteine amide.

This sequence belongs to the conotoxin A superfamily. Expressed by the venom duct.

The protein resides in the secreted. This chain is Alpha-conotoxin CnIL, found in Conus consors (Singed cone).